Reading from the N-terminus, the 413-residue chain is Protein CDKN2AIP homolog B (413 aa).

The XRN2-binding (XTBD) domain maps to Leu21–Val118. A disordered region spans residues Val118–Thr266. Basic and acidic residues predominate over residues Asn183–Val193.

It belongs to the CARF family.

The protein localises to the nucleus. Its subcellular location is the nucleoplasm. Its function is as follows. May regulate DNA damage response and cell proliferation. The polypeptide is Protein CDKN2AIP homolog B (cdkn2aip-b) (Xenopus laevis (African clawed frog)).